We begin with the raw amino-acid sequence, 317 residues long: MSFSSKVKSEVCRYDDYSKGEAIAVLSAVMKASGTLALEGNRKISFKIITENPAIARLIFKLLKKYFDIHTEIMMKKSNSLKKNNVYVVSITEDMGVRELLKTVGVMKNEDGIVTLSYDIPEFVVKDDESRKMYIRGAFLGGGSVSNPEKMYHLEFVTHNEDYASNLRDLINTYGLNSKVIQRKNSYVVYIKEGEQVVDLLNIIGAHSSLLELENIRIIKEMRNNINRLVNCETANLSKTVNASVRQIESIKLIEKQIGLSRLPENLREVAKLRLNYPDESLKELGKMLEPPVGKSGVNHRLRKIEKIAEELRKEGR.

The H-T-H motif DNA-binding region spans 281–314 (SLKELGKMLEPPVGKSGVNHRLRKIEKIAEELRK).

It belongs to the WhiA family.

In terms of biological role, involved in cell division and chromosome segregation. This Clostridium acetobutylicum (strain ATCC 824 / DSM 792 / JCM 1419 / IAM 19013 / LMG 5710 / NBRC 13948 / NRRL B-527 / VKM B-1787 / 2291 / W) protein is Probable cell division protein WhiA.